The following is a 105-amino-acid chain: Serine protease inhibitor Kazal-type 6 (105 aa).

A signal peptide spans 1 to 23 (MKVAGVFLLLSLALLCFFSGAFS). At Gln24 the chain carries Pyrrolidone carboxylic acid. A Kazal-like domain is found at 49-105 (RLFQINCGEFRDPKVFCTRESDPLCGSDGQTYGNKCAFCKALEKSSGKINLKHRGKC). Intrachain disulfides connect Cys55–Cys87, Cys65–Cys84, and Cys73–Cys105.

Expressed in the upper epidermis and in skin appendages.

It is found in the secreted. Serine protease inhibitor selective for kallikreins. Efficiently inhibits KLK5 and human KLK2, KLK4, KLK5, KLK6, KLK7, KLK12, KLK13 and KLK14. Doesn't inhibit human KLK1 and KLK8. In Mus musculus (Mouse), this protein is Serine protease inhibitor Kazal-type 6 (Spink6).